Consider the following 257-residue polypeptide: Phosphatidylglycerol--prolipoprotein diacylglyceryl transferase (257 aa).

The next 7 membrane-spanning stretches (helical) occupy residues 13–33 (IGPIDVHWYGIFMAISIAIGG), 49–69 (FLLNLLMIVVISGVVGARLMF), 88–108 (IYEGGLSWHGAVLGGFLAGLY), 123–143 (FAVLGLSIGNILVRIGNIFNQ), 152–172 (FAFGRWPAQLVGVAMGIILLI), 185–202 (GYQFWSFIFYYQLMRGLI), and 223–243 (IGFFTLTQLVTPFILILAYWM). Arg-136 lines the a 1,2-diacyl-sn-glycero-3-phospho-(1'-sn-glycerol) pocket.

This sequence belongs to the Lgt family.

The protein localises to the cell membrane. It carries out the reaction L-cysteinyl-[prolipoprotein] + a 1,2-diacyl-sn-glycero-3-phospho-(1'-sn-glycerol) = an S-1,2-diacyl-sn-glyceryl-L-cysteinyl-[prolipoprotein] + sn-glycerol 1-phosphate + H(+). It functions in the pathway protein modification; lipoprotein biosynthesis (diacylglyceryl transfer). In terms of biological role, catalyzes the transfer of the diacylglyceryl group from phosphatidylglycerol to the sulfhydryl group of the N-terminal cysteine of a prolipoprotein, the first step in the formation of mature lipoproteins. The protein is Phosphatidylglycerol--prolipoprotein diacylglyceryl transferase of Thermoanaerobacter pseudethanolicus (strain ATCC 33223 / 39E) (Clostridium thermohydrosulfuricum).